The primary structure comprises 464 residues: Protein FAM90A15 (464 aa).

3 disordered regions span residues Met1–Leu42, Pro70–Ala389, and His415–Pro437. 2 stretches are compositionally biased toward basic and acidic residues: residues Gly74–Val89 and Asn97–Arg114. Residues Leu180–Leu197 show a composition bias toward low complexity.

Belongs to the FAM90 family.

The protein is Protein FAM90A15 of Homo sapiens (Human).